The sequence spans 413 residues: Multifunctional CCA protein (413 aa).

2 residues coordinate ATP: G8 and R11. Positions 8 and 11 each coordinate CTP. Positions 21 and 23 each coordinate Mg(2+). ATP contacts are provided by R91, R137, and R140. R91, R137, and R140 together coordinate CTP. One can recognise an HD domain in the interval 228–329; sequence TGVHTLMTLS…VKLFDAIDAW (102 aa).

The protein belongs to the tRNA nucleotidyltransferase/poly(A) polymerase family. Bacterial CCA-adding enzyme type 1 subfamily. Monomer. Can also form homodimers and oligomers. The cofactor is Mg(2+). Ni(2+) is required as a cofactor.

It catalyses the reaction a tRNA precursor + 2 CTP + ATP = a tRNA with a 3' CCA end + 3 diphosphate. The enzyme catalyses a tRNA with a 3' CCA end + 2 CTP + ATP = a tRNA with a 3' CCACCA end + 3 diphosphate. In terms of biological role, catalyzes the addition and repair of the essential 3'-terminal CCA sequence in tRNAs without using a nucleic acid template. Adds these three nucleotides in the order of C, C, and A to the tRNA nucleotide-73, using CTP and ATP as substrates and producing inorganic pyrophosphate. tRNA 3'-terminal CCA addition is required both for tRNA processing and repair. Also involved in tRNA surveillance by mediating tandem CCA addition to generate a CCACCA at the 3' terminus of unstable tRNAs. While stable tRNAs receive only 3'-terminal CCA, unstable tRNAs are marked with CCACCA and rapidly degraded. This Salmonella typhimurium (strain LT2 / SGSC1412 / ATCC 700720) protein is Multifunctional CCA protein.